A 176-amino-acid polypeptide reads, in one-letter code: 3-hydroxydecanoyl-[acyl-carrier-protein] dehydratase (176 aa).

The active site involves His71.

The protein belongs to the thioester dehydratase family. FabA subfamily. As to quaternary structure, homodimer.

Its subcellular location is the cytoplasm. The enzyme catalyses a (3R)-hydroxyacyl-[ACP] = a (2E)-enoyl-[ACP] + H2O. The catalysed reaction is (3R)-hydroxydecanoyl-[ACP] = (2E)-decenoyl-[ACP] + H2O. It carries out the reaction (2E)-decenoyl-[ACP] = (3Z)-decenoyl-[ACP]. The protein operates within lipid metabolism; fatty acid biosynthesis. Functionally, necessary for the introduction of cis unsaturation into fatty acids. Catalyzes the dehydration of (3R)-3-hydroxydecanoyl-ACP to E-(2)-decenoyl-ACP and then its isomerization to Z-(3)-decenoyl-ACP. Can catalyze the dehydratase reaction for beta-hydroxyacyl-ACPs with saturated chain lengths up to 16:0, being most active on intermediate chain length. The chain is 3-hydroxydecanoyl-[acyl-carrier-protein] dehydratase from Afipia carboxidovorans (strain ATCC 49405 / DSM 1227 / KCTC 32145 / OM5) (Oligotropha carboxidovorans).